The following is a 151-amino-acid chain: Peptide methionine sulfoxide reductase MsrB (151 aa).

Positions 9–132 (DGELKRTLTK…NSAALKFIPF (124 aa)) constitute a MsrB domain. Cysteine 121 acts as the Nucleophile in catalysis.

It belongs to the MsrB Met sulfoxide reductase family.

It carries out the reaction L-methionyl-[protein] + [thioredoxin]-disulfide + H2O = L-methionyl-(R)-S-oxide-[protein] + [thioredoxin]-dithiol. In Mycoplasma pneumoniae (strain ATCC 29342 / M129 / Subtype 1) (Mycoplasmoides pneumoniae), this protein is Peptide methionine sulfoxide reductase MsrB.